Here is a 409-residue protein sequence, read N- to C-terminus: MDPTLKELLHANLEWIFVGGKGGVGKTTTSCALATLFATTPISDAASPGGTRPRRVLLISTDPAHNLSDAFNQRFGPHPTPVKGLEESLAAMEVDPKNFTHGALMSSLTGAKSDGSASSLSAEAEADAAQHTASFARIGAVLKEAARTMPGIDEISVFAEILHYVRTLFYDLLIFDTAPTGHTLRLLALPQTLSSTFDKLMSLEGLAPMIEAASHLIGTNLGALGGACGDTAGSCEQATAAPSLSSAAPGEGSAAAASSQSRWCITADEVRSTALHWRQTMEEVQARFNDPNRTSFVCVCIAEFLSVYETERLVQELMKYNIGCDSIVVNQLVLKPSSEPPCRMCSARQKIQAKYLEQIDLLYEDFHVVKMPLLSDEVRGVPALKKFARFLQEPYSPDTHGYIDVQEPC.

21–28 (KGGVGKTT) contacts ATP. D62 is an active-site residue. Residues E303 and N330 each contribute to the ATP site. 2 residues coordinate Zn(2+): C342 and C345.

The protein belongs to the arsA ATPase family. In terms of assembly, homodimer.

Its subcellular location is the cytoplasm. It localises to the endoplasmic reticulum. Functionally, ATPase required for the post-translational delivery of tail-anchored (TA) proteins to the endoplasmic reticulum. Recognizes and selectively binds the transmembrane domain of TA proteins in the cytosol. This complex then targets to the endoplasmic reticulum by membrane-bound receptors, where the tail-anchored protein is released for insertion. This process is regulated by ATP binding and hydrolysis. ATP binding drives the homodimer towards the closed dimer state, facilitating recognition of newly synthesized TA membrane proteins. ATP hydrolysis is required for insertion. Subsequently, the homodimer reverts towards the open dimer state, lowering its affinity for the membrane-bound receptor, and returning it to the cytosol to initiate a new round of targeting. In Leishmania major, this protein is ATPase ASNA1 homolog.